The following is a 147-amino-acid chain: UPF0306 protein YhbP (147 aa).

It belongs to the UPF0306 family.

The protein is UPF0306 protein YhbP of Escherichia coli O157:H7.